Here is a 528-residue protein sequence, read N- to C-terminus: Phosphoenolpyruvate carboxykinase (ATP) (528 aa).

Arg56, Tyr192, and Lys198 together coordinate substrate. ATP is bound by residues Lys198, His217, and 233–241 (GLSGTGKTT). The Mn(2+) site is built by Lys198 and His217. Residue Asp254 participates in Mn(2+) binding. 3 residues coordinate ATP: Glu282, Arg319, and Thr444. Arg319 contributes to the substrate binding site.

It belongs to the phosphoenolpyruvate carboxykinase (ATP) family. Requires Mn(2+) as cofactor.

It localises to the cytoplasm. The enzyme catalyses oxaloacetate + ATP = phosphoenolpyruvate + ADP + CO2. Its pathway is carbohydrate biosynthesis; gluconeogenesis. Involved in the gluconeogenesis. Catalyzes the conversion of oxaloacetate (OAA) to phosphoenolpyruvate (PEP) through direct phosphoryl transfer between the nucleoside triphosphate and OAA. In Geobacillus thermodenitrificans (strain NG80-2), this protein is Phosphoenolpyruvate carboxykinase (ATP).